The sequence spans 112 residues: MGDDELSEIRKRRMAQLQQQAGDQQAMQEEVERQQRLKSQIQMVLMQVLEPDARERLNTIRLTKPDFASAVEQQLVMLAQSGRLRQKITDAQLKDLLRQLAPAKRDYSITRK.

This sequence belongs to the PDCD5 family.

This Methanoregula boonei (strain DSM 21154 / JCM 14090 / 6A8) protein is DNA-binding protein Mboo_1886.